The sequence spans 473 residues: Trigger factor (473 aa).

Positions 174–261 constitute a PPIase FKBP-type domain; that stretch reads GDIAVVSFKG…LKDLKEKELP (88 aa). A disordered region spans residues 437–473; that stretch reads EISEKVTKSTTKSKTKSKTKKESQAKSEPNKKKKEKK. Residues 456-466 show a composition bias toward basic and acidic residues; sequence KKESQAKSEPN.

The protein belongs to the FKBP-type PPIase family. Tig subfamily.

Its subcellular location is the cytoplasm. The catalysed reaction is [protein]-peptidylproline (omega=180) = [protein]-peptidylproline (omega=0). Its function is as follows. Involved in protein export. Acts as a chaperone by maintaining the newly synthesized protein in an open conformation. Functions as a peptidyl-prolyl cis-trans isomerase. The chain is Trigger factor from Prochlorococcus marinus (strain MIT 9515).